Consider the following 255-residue polypeptide: Cytochrome b561 and DOMON domain-containing protein At5g48750 (255 aa).

The signal sequence occupies residues 1–27 (MFLSSRTIFVGLCFLFVLAPCFTRATT). The region spanning 54–169 (LDSFLHYSYV…TVVNHLWQDG (116 aa)) is the DOMON domain. In terms of domain architecture, Cytochrome b561 spans 176–255 (RLGMHAMSGN…DPTWFYILIL (80 aa)). A helical transmembrane segment spans residues 216-236 (IHGLVNAVCWGIFIPIGVMAA).

Its subcellular location is the membrane. This chain is Cytochrome b561 and DOMON domain-containing protein At5g48750, found in Arabidopsis thaliana (Mouse-ear cress).